We begin with the raw amino-acid sequence, 392 residues long: Formate-dependent phosphoribosylglycinamide formyltransferase (392 aa).

Residues 15–16 (EL) and glutamate 75 each bind N(1)-(5-phospho-beta-D-ribosyl)glycinamide. ATP contacts are provided by residues arginine 107, lysine 148, 153–158 (SSGKGQ), 188–191 (EEFL), and glutamate 196. In terms of domain architecture, ATP-grasp spans 112–302 (DLASGELGLH…EFELHLRAVL (191 aa)). Mg(2+)-binding residues include glutamate 261 and glutamate 273. Residues aspartate 280, lysine 350, and 357–358 (RR) each bind N(1)-(5-phospho-beta-D-ribosyl)glycinamide.

Belongs to the PurK/PurT family. As to quaternary structure, homodimer.

It carries out the reaction N(1)-(5-phospho-beta-D-ribosyl)glycinamide + formate + ATP = N(2)-formyl-N(1)-(5-phospho-beta-D-ribosyl)glycinamide + ADP + phosphate + H(+). The protein operates within purine metabolism; IMP biosynthesis via de novo pathway; N(2)-formyl-N(1)-(5-phospho-D-ribosyl)glycinamide from N(1)-(5-phospho-D-ribosyl)glycinamide (formate route): step 1/1. Involved in the de novo purine biosynthesis. Catalyzes the transfer of formate to 5-phospho-ribosyl-glycinamide (GAR), producing 5-phospho-ribosyl-N-formylglycinamide (FGAR). Formate is provided by PurU via hydrolysis of 10-formyl-tetrahydrofolate. The protein is Formate-dependent phosphoribosylglycinamide formyltransferase of Synechococcus sp. (strain CC9902).